The sequence spans 218 residues: Glutathione S-transferase-like protein OpS6 (218 aa).

A GST N-terminal domain is found at 5–86; sequence QPIKLYAHKK…YLIEQYDKDG (82 aa). Residues 92–218 form the GST C-terminal domain; the sequence is SLQDKSLARA…KIAATKAALA (127 aa).

Belongs to the GST superfamily.

It functions in the pathway secondary metabolite biosynthesis. Functionally, glutathione S-transferase-like protein; part of the gene cluster that mediates the biosynthesis of the bibenzoquinone oosporein, a metabolite required for fungal virulence that acts by evading host immunity to facilitate fungal multiplication in insects. The non-reducing polyketide synthase OpS1 produces orsellinic acid by condensing acetyl-CoA with 3 malonyl-CoA units. Orsellinic acid is then hydroxylated to benzenetriol by the hydroxylase OpS4. The intermediate is oxidized either nonenzymatically to 5,5'-dideoxy-oosporein or enzymatically to benzenetetrol by the oxidoreductase OpS7. The latter is further dimerized to oosporein by the catalase OpS5. OpS6 probably functions en route for protecting cells against oxidative stress by scavenging any leaked free radical form of benzenetetrol by activating the thiol group of glutathione. The sequence is that of Glutathione S-transferase-like protein OpS6 from Beauveria bassiana (strain ARSEF 2860) (White muscardine disease fungus).